Reading from the N-terminus, the 25-residue chain is Brevinin-2R (25 aa).

A disulfide bond links Cys-19 and Cys-25.

Belongs to the frog skin active peptide (FSAP) family. Brevinin subfamily. As to expression, expressed by the skin glands.

Its subcellular location is the secreted. Its function is as follows. Cytotoxic to cancer cells, acts via the activation of the lysosomal-mitochondrial death pathway and autophagy-like cell death. Does not show significant hemolytic activity. In Pelophylax ridibundus (Marsh frog), this protein is Brevinin-2R.